A 206-amino-acid chain; its full sequence is Thymidylate kinase (206 aa).

Residue 11–18 (GIDGAGKT) participates in ATP binding.

This sequence belongs to the thymidylate kinase family.

It catalyses the reaction dTMP + ATP = dTDP + ADP. In terms of biological role, phosphorylation of dTMP to form dTDP in both de novo and salvage pathways of dTTP synthesis. This is Thymidylate kinase from Burkholderia cenocepacia (strain ATCC BAA-245 / DSM 16553 / LMG 16656 / NCTC 13227 / J2315 / CF5610) (Burkholderia cepacia (strain J2315)).